A 287-amino-acid chain; its full sequence is Pyridoxal kinase PdxY (287 aa).

Substrate is bound by residues Ser10 and 45–46 (TQ). Residues Asp112, Ala144, Glu149, Lys182, and 209-212 (RPLV) each bind ATP. Asp224 provides a ligand contact to substrate.

This sequence belongs to the pyridoxine kinase family. PdxY subfamily. Homodimer. The cofactor is Mg(2+).

It catalyses the reaction pyridoxal + ATP = pyridoxal 5'-phosphate + ADP + H(+). The protein operates within cofactor metabolism; pyridoxal 5'-phosphate salvage; pyridoxal 5'-phosphate from pyridoxal: step 1/1. Pyridoxal kinase involved in the salvage pathway of pyridoxal 5'-phosphate (PLP). Catalyzes the phosphorylation of pyridoxal to PLP. In Shigella flexneri, this protein is Pyridoxal kinase PdxY.